Reading from the N-terminus, the 120-residue chain is NAD(P)H-quinone oxidoreductase subunit 3, chloroplastic (120 aa).

Transmembrane regions (helical) follow at residues 7–27 (YETF…AFLI), 64–84 (MFAL…PWAM), and 88–108 (ILGI…IVGS).

This sequence belongs to the complex I subunit 3 family. NDH is composed of at least 16 different subunits, 5 of which are encoded in the nucleus.

The protein localises to the plastid. It localises to the chloroplast thylakoid membrane. It catalyses the reaction a plastoquinone + NADH + (n+1) H(+)(in) = a plastoquinol + NAD(+) + n H(+)(out). The enzyme catalyses a plastoquinone + NADPH + (n+1) H(+)(in) = a plastoquinol + NADP(+) + n H(+)(out). NDH shuttles electrons from NAD(P)H:plastoquinone, via FMN and iron-sulfur (Fe-S) centers, to quinones in the photosynthetic chain and possibly in a chloroplast respiratory chain. The immediate electron acceptor for the enzyme in this species is believed to be plastoquinone. Couples the redox reaction to proton translocation, and thus conserves the redox energy in a proton gradient. The chain is NAD(P)H-quinone oxidoreductase subunit 3, chloroplastic from Cycas taitungensis (Prince sago).